Consider the following 589-residue polypeptide: Sentrin-specific protease 2 (589 aa).

The Nuclear localization signal signature appears at 28-31; the sequence is KRRR. A Phosphoserine modification is found at serine 32. A Nuclear localization signal motif is present at residues 46–51; it reads PAKRPR. Positions 155–176 are disordered; it reads SEGCNRRPGGRRHSKGNPESSL. A Nuclear export signal motif is present at residues 317 to 332; that stretch reads LEPDLSEEVSARLRLG. Phosphoserine occurs at positions 333 and 344. The protease stretch occupies residues 396 to 560; that stretch reads RITRGDIQTL…FTCKYADYIS (165 aa). Active-site residues include histidine 478 and aspartate 495. Cysteine 548 serves as the catalytic Nucleophile.

This sequence belongs to the peptidase C48 family. In terms of assembly, binds to SUMO2 and SUMO3. Interacts with the C-terminal domain of NUP153 via its N-terminus. Interacts with MTA1. In terms of processing, polyubiquitinated; which leads to proteasomal degradation.

It localises to the nucleus. The protein resides in the nuclear pore complex. Its subcellular location is the nucleus membrane. The protein localises to the cytoplasm. Its function is as follows. Protease that catalyzes two essential functions in the SUMO pathway. The first is the hydrolysis of an alpha-linked peptide bond at the C-terminal end of the small ubiquitin-like modifier (SUMO) propeptides, SUMO1, SUMO2 and SUMO3 leading to the mature form of the proteins. The second is the deconjugation of SUMO1, SUMO2 and SUMO3 from targeted proteins, by cleaving an epsilon-linked peptide bond between the C-terminal glycine of the mature SUMO and the lysine epsilon-amino group of the target protein. May down-regulate CTNNB1 levels and thereby modulate the Wnt pathway. Deconjugates SUMO2 from MTA1. Plays a dynamic role in adipogenesis by desumoylating and promoting the stabilization of CEBPB. Acts as a regulator of the cGAS-STING pathway by catalyzing desumoylation of CGAS and STING1 during the late phase of viral infection. This chain is Sentrin-specific protease 2, found in Homo sapiens (Human).